The chain runs to 180 residues: MANRLKEKFVNEITPDLVKKFDYTSVMQVPKIEKIVLNMGVGDAVTNSKNLDEAVAELELISGQKPLVTKAKKSIAGFRLREGMSIGAKVTLRGERMYDFLDKLVNVSLPRVRDFRGVSSKAFDGRGNYTLGVREQLIFPEIDFDNVNRVRGLDIVIVTTANTDEESRELLAQFGMPFEK.

It belongs to the universal ribosomal protein uL5 family. In terms of assembly, part of the 50S ribosomal subunit; part of the 5S rRNA/L5/L18/L25 subcomplex. Contacts the 5S rRNA and the P site tRNA. Forms a bridge to the 30S subunit in the 70S ribosome.

Its function is as follows. This is one of the proteins that bind and probably mediate the attachment of the 5S RNA into the large ribosomal subunit, where it forms part of the central protuberance. In the 70S ribosome it contacts protein S13 of the 30S subunit (bridge B1b), connecting the 2 subunits; this bridge is implicated in subunit movement. Contacts the P site tRNA; the 5S rRNA and some of its associated proteins might help stabilize positioning of ribosome-bound tRNAs. In Pediococcus pentosaceus (strain ATCC 25745 / CCUG 21536 / LMG 10740 / 183-1w), this protein is Large ribosomal subunit protein uL5.